The following is a 499-amino-acid chain: MHEIITLQLGQRANYLATHFWNLQESYFTYNEGEESPIDHDVHFRAGVGADGSETYTPRTLIYDLKGAFGTLRKQNALYELSTDSEYGQGLWDGKEVIQKQTPIIPSEYQLNLEQGLPAPALSSETVRYWSDYNRVFYHPRSIIQLNDYELNSKIMPFEDWDVGEDLFNDLDKEHDLLDRDVRPFAEECDQLRAFQLFAGSDDAWGGFAAKYLDRIRDEYGKKAVWVWAMEGGSKLQRRNQLKRDINKARSIHAMAPQSSLYVPIKDPPGHVPSTINLDAQSEWQTSALISSALETVTLPTRLRPYHDFETSLAGEDGMHKIFELQSTILPEDKTPTGAAGGNEASTEATSKVKTEFDMDFTYDDPQNRNSHIFNQVQITRGYSPVTDEASIREDLGLSRKKRFYNSEPMLESFYTPLAFPTLDSFPHNLFPVKESNAKINILASLTASSRTAGKLRAMEVVARRVVGVDERENLVNGLGEIRESYETGWMSDSDFDDD.

This sequence belongs to the misato family.

Its subcellular location is the mitochondrion. In terms of biological role, involved in the partitioning of the mitochondrial organelle and mitochondrial DNA (mtDNA) inheritance. This chain is Protein dml1 (dml1), found in Aspergillus clavatus (strain ATCC 1007 / CBS 513.65 / DSM 816 / NCTC 3887 / NRRL 1 / QM 1276 / 107).